The primary structure comprises 90 residues: Large ribosomal subunit protein eL34 (90 aa).

Zn(2+) is bound by residues cysteine 36, cysteine 39, cysteine 72, and cysteine 75. The tract at residues 41–72 (RPLNGVPRGRPSELRKLPKTKKRPERPYPNLC) is disordered.

This sequence belongs to the eukaryotic ribosomal protein eL34 family. As to quaternary structure, part of the 50S ribosomal subunit. It depends on Zn(2+) as a cofactor.

This chain is Large ribosomal subunit protein eL34, found in Thermococcus kodakarensis (strain ATCC BAA-918 / JCM 12380 / KOD1) (Pyrococcus kodakaraensis (strain KOD1)).